Consider the following 108-residue polypeptide: Small ribosomal subunit protein bS16 (108 aa).

A disordered region spans residues 82 to 108; the sequence is ESKFSKNTQTENKKPVSKKTTKKSKDN. Over residues 96 to 108 the composition is skewed to basic residues; sequence PVSKKTTKKSKDN.

It belongs to the bacterial ribosomal protein bS16 family.

The chain is Small ribosomal subunit protein bS16 from Mycoplasma capricolum subsp. capricolum (strain California kid / ATCC 27343 / NCTC 10154).